The following is a 126-amino-acid chain: Large ribosomal subunit protein uL22 (126 aa).

It belongs to the universal ribosomal protein uL22 family. In terms of assembly, part of the 50S ribosomal subunit.

This protein binds specifically to 23S rRNA; its binding is stimulated by other ribosomal proteins, e.g. L4, L17, and L20. It is important during the early stages of 50S assembly. It makes multiple contacts with different domains of the 23S rRNA in the assembled 50S subunit and ribosome. Its function is as follows. The globular domain of the protein is located near the polypeptide exit tunnel on the outside of the subunit, while an extended beta-hairpin is found that lines the wall of the exit tunnel in the center of the 70S ribosome. In Dinoroseobacter shibae (strain DSM 16493 / NCIMB 14021 / DFL 12), this protein is Large ribosomal subunit protein uL22.